A 446-amino-acid polypeptide reads, in one-letter code: Argininosuccinate synthase (446 aa).

Residues 17–25 (AFSGGLDTS) and A43 each bind ATP. Y99 provides a ligand contact to L-citrulline. ATP-binding residues include G129 and T131. Residues T131, N135, and D136 each contribute to the L-aspartate site. N135 is a binding site for L-citrulline. Residue D136 coordinates ATP. Residues R139 and S192 each coordinate L-citrulline. Residue D194 coordinates ATP. L-citrulline contacts are provided by T201, E203, and E280.

The protein belongs to the argininosuccinate synthase family. Type 2 subfamily. In terms of assembly, homotetramer.

Its subcellular location is the cytoplasm. The enzyme catalyses L-citrulline + L-aspartate + ATP = 2-(N(omega)-L-arginino)succinate + AMP + diphosphate + H(+). Its pathway is amino-acid biosynthesis; L-arginine biosynthesis; L-arginine from L-ornithine and carbamoyl phosphate: step 2/3. This chain is Argininosuccinate synthase, found in Variovorax paradoxus (strain S110).